We begin with the raw amino-acid sequence, 83 residues long: Apolipoprotein C-I, basic form (83 aa).

The first 26 residues, 1 to 26 (MRLFLSLPVLVVVLSMVLEGPAPAQG), serve as a signal peptide directing secretion.

It belongs to the apolipoprotein C1 family.

The protein localises to the secreted. Functionally, inhibitor of lipoprotein binding to the low density lipoprotein (LDL) receptor, LDL receptor-related protein, and very low density lipoprotein (VLDL) receptor. Associates with high density lipoproteins (HDL) and the triacylglycerol-rich lipoproteins in the plasma and makes up about 10% of the protein of the VLDL and 2% of that of HDL. Appears to interfere directly with fatty acid uptake and is also the major plasma inhibitor of cholesteryl ester transfer protein (CETP). Binds free fatty acids and reduces their intracellular esterification. Modulates the interaction of APOE with beta-migrating VLDL and inhibits binding of beta-VLDL to the LDL receptor-related protein. The chain is Apolipoprotein C-I, basic form (APOC1B) from Colobus guereza (Mantled guereza).